Reading from the N-terminus, the 1300-residue chain is Serine protease EspP (1300 aa).

Positions 1 to 55 (MNKIYSLKYSHITGGLIAVSELSGRVSSRATGKKKHKRILALCFLGLLQSSYSFA) are cleaved as a signal peptide. The Peptidase S6 domain occupies 57-311 (QMDISNFYIR…NQTTIDNLKN (255 aa)). Catalysis depends on charge relay system residues H127, D156, and S263. The Autotransporter domain occupies 1034 to 1300 (DINGEAGAWA…AVNANFRYSF (267 aa)).

In terms of processing, cleaved to release the mature protein from the outer membrane.

It localises to the periplasm. Its subcellular location is the secreted. The protein resides in the cell surface. The protein localises to the cell outer membrane. In terms of biological role, serine protease with cytotoxic effect. Disrupts actin cytoskeleton resulting cell detachment in vitro. In Escherichia coli, this protein is Serine protease EspP (espP).